A 601-amino-acid chain; its full sequence is Glutamine--fructose-6-phosphate aminotransferase [isomerizing] (601 aa).

Cys2 functions as the Nucleophile; for GATase activity in the catalytic mechanism. A Glutamine amidotransferase type-2 domain is found at 2–218 (CGIVGYIGYD…DHEIVIVKKD (217 aa)). 2 SIS domains span residues 284–423 (IIND…EHGR) and 453–591 (IATD…VDKP). Lys596 (for Fru-6P isomerization activity) is an active-site residue.

Homodimer.

The protein resides in the cytoplasm. The catalysed reaction is D-fructose 6-phosphate + L-glutamine = D-glucosamine 6-phosphate + L-glutamate. In terms of biological role, catalyzes the first step in hexosamine metabolism, converting fructose-6P into glucosamine-6P using glutamine as a nitrogen source. The protein is Glutamine--fructose-6-phosphate aminotransferase [isomerizing] of Staphylococcus aureus (strain COL).